Consider the following 401-residue polypeptide: Putative phosphatidylinositol 4-phosphate 5-kinase 11 (401 aa).

The PIPK domain maps to 1–390; the sequence is MELRATVENR…RFQDFVSNIF (390 aa). Over residues 242-260 the composition is skewed to polar residues; the sequence is SFKSNSTKSMKTASSSPDR. Residues 242–268 form a disordered region; sequence SFKSNSTKSMKTASSSPDRSSVAMYSC. Residues 350-371 are activation loop; that stretch reads YGMKKRIEHCYKSIQYNSNSIS.

It carries out the reaction a 1,2-diacyl-sn-glycero-3-phospho-(1D-myo-inositol 4-phosphate) + ATP = a 1,2-diacyl-sn-glycero-3-phospho-(1D-myo-inositol-4,5-bisphosphate) + ADP + H(+). The sequence is that of Putative phosphatidylinositol 4-phosphate 5-kinase 11 (PIP5K11) from Arabidopsis thaliana (Mouse-ear cress).